A 395-amino-acid chain; its full sequence is MPIRTVMKANEAAAWAAKLAKPKVIAAFPITPSTLVPEKISEFVANGELDAEFIKVESEHSAISAVVGASAAGVRTFTATASQGLALMHEVLFIAAGMRLPIVMAIGNRSLSAPINIWNDWQDSISQRDTGWIQFYAENNQEALDLILLAYKVAEDERVLLPAMVGFDAFILTHTVEPVEIPDQEVVDEFLGEYEPKHAYLDPKRPITQGTLAFPAHYMEAKYLVWDAMEKARKVIDEAFAEFEKRFGRKYQKIEEYKTDDAEIIFVTMGSLAGTLKDWVDKKREEGYKVGAAKMTVYRPFPVEEIRALAKKAKVLGFIEKDISIGLYGAVFIDASAALVNESERPLMLDFIAGLGGRDVTFGQLDDALRIAEEALEKGEVEKPIHWIGLRKELL.

Heterotetramer of one alpha, one beta, one delta and one gamma chain.

The catalysed reaction is 2 oxidized [2Fe-2S]-[ferredoxin] + pyruvate + CoA = 2 reduced [2Fe-2S]-[ferredoxin] + acetyl-CoA + CO2 + H(+). The sequence is that of Pyruvate synthase subunit PorA (porA) from Pyrococcus horikoshii (strain ATCC 700860 / DSM 12428 / JCM 9974 / NBRC 100139 / OT-3).